The primary structure comprises 463 residues: Protein DML1 (463 aa).

Belongs to the misato family.

The protein resides in the mitochondrion. Its function is as follows. Involved in the partitioning of the mitochondrial organelle and mitochondrial DNA (mtDNA) inheritance. This chain is Protein DML1 (DML1), found in Debaryomyces hansenii (strain ATCC 36239 / CBS 767 / BCRC 21394 / JCM 1990 / NBRC 0083 / IGC 2968) (Yeast).